A 296-amino-acid chain; its full sequence is Phosphatidylserine decarboxylase proenzyme (296 aa).

Catalysis depends on charge relay system; for autoendoproteolytic cleavage activity residues D92, H149, and S251. S251 functions as the Schiff-base intermediate with substrate; via pyruvic acid; for decarboxylase activity in the catalytic mechanism. S251 carries the post-translational modification Pyruvic acid (Ser); by autocatalysis.

This sequence belongs to the phosphatidylserine decarboxylase family. PSD-B subfamily. Prokaryotic type I sub-subfamily. Heterodimer of a large membrane-associated beta subunit and a small pyruvoyl-containing alpha subunit. Pyruvate serves as cofactor. In terms of processing, is synthesized initially as an inactive proenzyme. Formation of the active enzyme involves a self-maturation process in which the active site pyruvoyl group is generated from an internal serine residue via an autocatalytic post-translational modification. Two non-identical subunits are generated from the proenzyme in this reaction, and the pyruvate is formed at the N-terminus of the alpha chain, which is derived from the carboxyl end of the proenzyme. The autoendoproteolytic cleavage occurs by a canonical serine protease mechanism, in which the side chain hydroxyl group of the serine supplies its oxygen atom to form the C-terminus of the beta chain, while the remainder of the serine residue undergoes an oxidative deamination to produce ammonia and the pyruvoyl prosthetic group on the alpha chain. During this reaction, the Ser that is part of the protease active site of the proenzyme becomes the pyruvoyl prosthetic group, which constitutes an essential element of the active site of the mature decarboxylase.

Its subcellular location is the cell membrane. The catalysed reaction is a 1,2-diacyl-sn-glycero-3-phospho-L-serine + H(+) = a 1,2-diacyl-sn-glycero-3-phosphoethanolamine + CO2. Its pathway is phospholipid metabolism; phosphatidylethanolamine biosynthesis; phosphatidylethanolamine from CDP-diacylglycerol: step 2/2. Functionally, catalyzes the formation of phosphatidylethanolamine (PtdEtn) from phosphatidylserine (PtdSer). In Hahella chejuensis (strain KCTC 2396), this protein is Phosphatidylserine decarboxylase proenzyme.